The primary structure comprises 40 residues: Proteinase inhibitor IIB (40 aa).

3 disulfides stabilise this stretch: Cys-2-Cys-16, Cys-6-Cys-28, and Cys-12-Cys-38.

The protein belongs to the protease inhibitor I20 (potato type II proteinase inhibitor) family.

It is found in the secreted. Inhibits chymotrypsin and subtilisin strongly. The chain is Proteinase inhibitor IIB from Solanum tuberosum (Potato).